We begin with the raw amino-acid sequence, 79 residues long: Small ribosomal subunit protein eS17 (79 aa).

It belongs to the eukaryotic ribosomal protein eS17 family.

The polypeptide is Small ribosomal subunit protein eS17 (Saccharolobus islandicus (strain Y.N.15.51 / Yellowstone #2) (Sulfolobus islandicus)).